The primary structure comprises 175 residues: Transcriptional repressor NrdR (175 aa).

The segment at 3 to 34 (CPICQDTNSRVLESRSAESGKSIRRRRECMNC) is a zinc-finger region. The ATP-cone domain maps to 49–139 (ITIIKRDGKK…VYRKFQGIRD (91 aa)).

Belongs to the NrdR family. Zn(2+) serves as cofactor.

Negatively regulates transcription of bacterial ribonucleotide reductase nrd genes and operons by binding to NrdR-boxes. In Trichodesmium erythraeum (strain IMS101), this protein is Transcriptional repressor NrdR.